Reading from the N-terminus, the 631-residue chain is MSATKLTRREQRAQAQHFIDTLEGSAFPNSKRIYITGTHPGVRVPMREIQLSPTLIGGSKEQPQYEENEAIPVYDTSGPYGDPQIAINVQQGLAKLRQPWIDARGDTEELTVRSSDYTKARLADDGLDELRFSGVLTPKRAKAGHRVTQLHYARKGIITPEMEFIAIRENMGRERIRSEVLRHQHPGMSFGARLPENITAEFVRDEVAAGRAIIPANINHPESEPMIIGRNFLVKVNANIGNSAVTSSIEEEVEKLVWSTRWGADTVMDLSTGRYIHETREWILRNSPVPIGTVPIYQALEKVNGIAEDLTWEVFRDTLLEQAEQGVDYFTIHAGVLLRYVPMTAKRLTGIVSRGGSIMAKWCLSHHQENFLYQRFREICEICAAYDVSLSLGDGLRPGSIQDANDEAQFAELHTLGELTKIAWEYDVQVMIEGPGHVPMQMIRRNMTEELEHCHEAPFYTLGPLTTDIAPGYDHFTSGIGAAMIGWFGCAMLCYVTPKEHLGLPNKEDVKQGLITYKIAAHAADLAKGHPGAQIRDNAMSKARFEFRWEDQFNLALDPFTARAYHDETLPQESGKVAHFCSMCGPKFCSMKISQEVRDYAAAQTIEVGMADMSENFRARGGEIYLRKEEA.

Substrate is bound by residues asparagine 239, methionine 268, tyrosine 297, histidine 333, 353 to 355, 394 to 397, and glutamate 433; these read SRG and DGLR. Residue histidine 437 coordinates Zn(2+). Tyrosine 460 provides a ligand contact to substrate. A Zn(2+)-binding site is contributed by histidine 501. Residues cysteine 581, cysteine 584, and cysteine 589 each coordinate [4Fe-4S] cluster.

It belongs to the ThiC family. As to quaternary structure, homodimer. [4Fe-4S] cluster is required as a cofactor.

It carries out the reaction 5-amino-1-(5-phospho-beta-D-ribosyl)imidazole + S-adenosyl-L-methionine = 4-amino-2-methyl-5-(phosphooxymethyl)pyrimidine + CO + 5'-deoxyadenosine + formate + L-methionine + 3 H(+). Its pathway is cofactor biosynthesis; thiamine diphosphate biosynthesis. Its function is as follows. Catalyzes the synthesis of the hydroxymethylpyrimidine phosphate (HMP-P) moiety of thiamine from aminoimidazole ribotide (AIR) in a radical S-adenosyl-L-methionine (SAM)-dependent reaction. This Escherichia coli O45:K1 (strain S88 / ExPEC) protein is Phosphomethylpyrimidine synthase.